We begin with the raw amino-acid sequence, 451 residues long: Phosphoglucosamine mutase (451 aa).

The active-site Phosphoserine intermediate is serine 102. Mg(2+) contacts are provided by serine 102, aspartate 243, aspartate 245, and aspartate 247. Residue serine 102 is modified to Phosphoserine.

It belongs to the phosphohexose mutase family. It depends on Mg(2+) as a cofactor. Post-translationally, activated by phosphorylation.

The enzyme catalyses alpha-D-glucosamine 1-phosphate = D-glucosamine 6-phosphate. Its function is as follows. Catalyzes the conversion of glucosamine-6-phosphate to glucosamine-1-phosphate. The chain is Phosphoglucosamine mutase from Paramagnetospirillum magneticum (strain ATCC 700264 / AMB-1) (Magnetospirillum magneticum).